The sequence spans 544 residues: MSIFIGGAWPYANGSLHLGHIASLLPGDILARYYRAKGENVLYVSGSDCNGTPIAIRAKQEGVTAKEIANKYHEEFQRCFRDLGFTYDCYTRTDSEHHHETVQKVFLRLLEEGYIYKKTVEQAYCETCTQFLPDRYVEGICPYCHEAARGDQCDACSAILDPLDLLEKKCKLCGSTPSVEETEHFYFALHTFQEQIKKVVEIVKEKGTWRDNAIQLTERYVKEGLQDRAVSRDLPIGVSIPVKGYEDKKIYVWIEAVAGYYSASKHWAEETGKDDQEFWNSDAQTYYVHGKDNIPFHSVIWPAVLLGIGEEAIPRHIVSNEYLTVEKRKLSTSKNWAVWVPDILERYDPDSIRYFLTVNAPENRDTDFSWREFIYSHNSELLGAYGNFVNRTLKFIEKYYGGIVPKGSIEVELKDKVEGLYKHVGEAIEQTKFKVALETIFDAVRFANKYFDEKQPWKQREDDPVSCEETIYNCVYLIANFANLLEPFLPFSSERVRSTLSIIKRNWEPQNTLPSRIDSVQPLFERIDVKQIEHEVGKLYGAVK.

A 'HIGH' region motif is present at residues 10-20 (PYANGSLHLGH). Residues cysteine 141, cysteine 144, cysteine 153, and cysteine 156 each coordinate Zn(2+). The 'KMSKS' region motif lies at 329 to 333 (KLSTS). ATP is bound at residue threonine 332.

Belongs to the class-I aminoacyl-tRNA synthetase family. MetG type 1 subfamily. Monomer. Requires Zn(2+) as cofactor.

The protein resides in the cytoplasm. The catalysed reaction is tRNA(Met) + L-methionine + ATP = L-methionyl-tRNA(Met) + AMP + diphosphate. In terms of biological role, is required not only for elongation of protein synthesis but also for the initiation of all mRNA translation through initiator tRNA(fMet) aminoacylation. The polypeptide is Methionine--tRNA ligase (Bacillus cereus (strain B4264)).